The chain runs to 194 residues: ATP synthase subunit delta (194 aa).

The protein belongs to the ATPase delta chain family. F-type ATPases have 2 components, F(1) - the catalytic core - and F(0) - the membrane proton channel. F(1) has five subunits: alpha(3), beta(3), gamma(1), delta(1), epsilon(1). F(0) has three main subunits: a(1), b(2) and c(10-14). The alpha and beta chains form an alternating ring which encloses part of the gamma chain. F(1) is attached to F(0) by a central stalk formed by the gamma and epsilon chains, while a peripheral stalk is formed by the delta and b chains.

The protein resides in the cell inner membrane. Functionally, f(1)F(0) ATP synthase produces ATP from ADP in the presence of a proton or sodium gradient. F-type ATPases consist of two structural domains, F(1) containing the extramembraneous catalytic core and F(0) containing the membrane proton channel, linked together by a central stalk and a peripheral stalk. During catalysis, ATP synthesis in the catalytic domain of F(1) is coupled via a rotary mechanism of the central stalk subunits to proton translocation. Its function is as follows. This protein is part of the stalk that links CF(0) to CF(1). It either transmits conformational changes from CF(0) to CF(1) or is implicated in proton conduction. The protein is ATP synthase subunit delta of Parvibaculum lavamentivorans (strain DS-1 / DSM 13023 / NCIMB 13966).